The following is a 76-amino-acid chain: YPERPIIFYAVCYMMVSLIFFIGFLLEDRVACNASSPAQYKASTVTQGSHNKACTMLFMVLYFFTMAGSVWWVILR.

The Cytoplasmic portion of the chain corresponds to 1-5 (YPERP). The chain crosses the membrane as a helical span at residues 6-26 (IIFYAVCYMMVSLIFFIGFLL). Over 27–54 (EDRVACNASSPAQYKASTVTQGSHNKAC) the chain is Extracellular. Asparagine 33 is a glycosylation site (N-linked (GlcNAc...) asparagine). A helical transmembrane segment spans residues 55–75 (TMLFMVLYFFTMAGSVWWVIL). Arginine 76 is a topological domain (cytoplasmic).

Belongs to the G-protein coupled receptor Fz/Smo family.

It localises to the membrane. The protein localises to the cell membrane. The protein resides in the cell surface. It is found in the apical cell membrane. Receptor for Wnt proteins. Most of frizzled receptors are coupled to the beta-catenin canonical signaling pathway, which leads to the activation of disheveled proteins, inhibition of GSK-3 kinase, nuclear accumulation of beta-catenin and activation of Wnt target genes. A second signaling pathway involving PKC and calcium fluxes has been seen for some family members, but it is not yet clear if it represents a distinct pathway or if it can be integrated in the canonical pathway, as PKC seems to be required for Wnt-mediated inactivation of GSK-3 kinase. Both pathways seem to involve interactions with G-proteins. May be involved in transduction and intercellular transmission of polarity information during tissue morphogenesis and/or in differentiated tissues. Plays a role in controlling early axon growth and guidance processes necessary for the formation of a subset of central and peripheral major fiber tracts. Involved in the migration of cranial neural crest cells. May also be implicated in the transmission of sensory information from the trunk and limbs to the brain. Controls commissural sensory axons guidance after midline crossing along the anterior-posterior axis in the developing spinal cord in a Wnt-dependent signaling pathway. Together with FZD6, is involved in the neural tube closure and plays a role in the regulation of the establishment of planar cell polarity (PCP). Promotes neurogenesis by maintaining sympathetic neuroblasts within the cell cycle in a beta-catenin-dependent manner. This chain is Frizzled-3 (FZD3), found in Gallus gallus (Chicken).